Consider the following 1119-residue polypeptide: Ubiquitin-associated protein 2 (1119 aa).

Residues 1-26 form a disordered region; it reads MMTSVSSDHCRGAREKPQISAAQSTQ. Over residues 8 to 17 the composition is skewed to basic and acidic residues; it reads DHCRGAREKP. Positions 48–92 constitute a UBA domain; that stretch reads KNDSDFEAKVKQLMEVTGKNQDECIVALHDCNGDVNKAINILLEG. A coiled-coil region spans residues 105–130; that stretch reads KKKNFAKENSENKENREKKSEKESSR. Residues 110–130 are compositionally biased toward basic and acidic residues; it reads AKENSENKENREKKSEKESSR. Disordered regions lie at residues 110-202, 385-476, 622-736, 853-905, 937-966, 982-1020, and 1082-1119; these read AKEN…YSDS, LGQF…SPST, VHNR…SSHQ, RDGS…VNPA, SAKQHGVNLSTPTPPFQQASGYGQHGYSTG, GGYAGSSQAPNKSAGSGPGKGVSVSSSTTGLPDMTGSVY, and HLPQDAQSGSGQRSQPSSLQPKSQASKPAYGNSPYWTN. R166 is modified (omega-N-methylarginine). Residues 168 to 182 show a composition bias toward basic residues; sequence KRARGRGFGRGRGRG. Low complexity predominate over residues 389–407; the sequence is TTTPSTQQNSTSHPTTTTS. Residues S432, S439, S473, and S630 each carry the phosphoserine modification. Residues 435-447 are compositionally biased toward low complexity; it reads LSQLSQRQQHQSQ. A compositionally biased stretch (polar residues) spans 651 to 662; that stretch reads SQQTLDTPKTTG. Low complexity predominate over residues 663–678; the sequence is PPSALPSVSSLPSTTS. The span at 679–694 shows a compositional bias: polar residues; it reads CTALLPSTSQHTGDLT. Low complexity-rich tracts occupy residues 695–736 and 874–900; these read SSPL…SSHQ and SASPAPATTPAQPQQSQSQTHHTAQQP. Polar residues predominate over residues 943-957; the sequence is VNLSTPTPPFQQASG. 2 stretches are compositionally biased toward low complexity: residues 1002–1011 and 1088–1102; these read GVSVSSSTTG and QSGSGQRSQPSSLQP.

In terms of assembly, may interact with ANXA2.

Its subcellular location is the nucleus. The protein localises to the chromosome. It is found in the cytoplasm. In terms of biological role, recruits the ubiquitination machinery to RNA polymerase II for polyubiquitination, removal and degradation, when the transcription-coupled nucleotide excision repair (TC-NER) machinery fails to resolve DNA damage. May promote the degradation of ANXA2. The chain is Ubiquitin-associated protein 2 from Homo sapiens (Human).